The chain runs to 534 residues: 26S proteasome non-ATPase regulatory subunit 3 (534 aa).

Residues 1 to 16 (MKQEGSARRRGADKAK) show a composition bias toward basic and acidic residues. Positions 1 to 69 (MKQEGSARRR…AEHSQRELDT (69 aa)) are disordered. The span at 17 to 32 (PPPGGGEQEPPPPPAP) shows a compositional bias: pro residues. Lys38 is covalently cross-linked (Glycyl lysine isopeptide (Lys-Gly) (interchain with G-Cter in SUMO1); alternate). Lys38 participates in a covalent cross-link: Glycyl lysine isopeptide (Lys-Gly) (interchain with G-Cter in SUMO2); alternate. A PCI domain is found at 286–465 (ARYLYYTGRI…GYVQSKEMID (180 aa)). Residues Ser418 and Ser430 each carry the phosphoserine modification. Residues 500-534 (SYNKDLESAEERREREQQDLEFAKEMAEDDDDSFP) form a disordered region. The segment covering 501–525 (YNKDLESAEERREREQQDLEFAKEM) has biased composition (basic and acidic residues).

It belongs to the proteasome subunit S3 family. As to quaternary structure, component of the 19S proteasome regulatory particle complex. The 26S proteasome consists of a 20S core particle (CP) and two 19S regulatory subunits (RP). The regulatory particle is made of a lid composed of 9 subunits including PSMD3, a base containing 6 ATPases and few additional components. Interacts with UBQLN1 (via ubiquitin-like domain). Interacts with ERCC6.

Its function is as follows. Component of the 26S proteasome, a multiprotein complex involved in the ATP-dependent degradation of ubiquitinated proteins. This complex plays a key role in the maintenance of protein homeostasis by removing misfolded or damaged proteins, which could impair cellular functions, and by removing proteins whose functions are no longer required. Therefore, the proteasome participates in numerous cellular processes, including cell cycle progression, apoptosis, or DNA damage repair. This is 26S proteasome non-ATPase regulatory subunit 3 (PSMD3) from Homo sapiens (Human).